The chain runs to 189 residues: Ribosome maturation factor RimM (189 aa).

Residues 96 to 169 (EDEFYYADLE…TLLIDPLAAG (74 aa)) form the PRC barrel domain.

It belongs to the RimM family. In terms of assembly, binds ribosomal protein uS19.

The protein localises to the cytoplasm. Its function is as follows. An accessory protein needed during the final step in the assembly of 30S ribosomal subunit, possibly for assembly of the head region. Essential for efficient processing of 16S rRNA. May be needed both before and after RbfA during the maturation of 16S rRNA. It has affinity for free ribosomal 30S subunits but not for 70S ribosomes. The protein is Ribosome maturation factor RimM of Rhizobium johnstonii (strain DSM 114642 / LMG 32736 / 3841) (Rhizobium leguminosarum bv. viciae).